The sequence spans 28 residues: Short cationic peptide-1b (28 aa).

Glu28 carries the post-translational modification Glutamic acid 1-amide.

As to expression, expressed by the venom gland.

The protein localises to the secreted. In Cupiennius salei (American wandering spider), this protein is Short cationic peptide-1b.